The following is a 195-amino-acid chain: Protein lin-28 homolog A (195 aa).

The region spanning 33–106 is the CSD domain; the sequence is QGSGVCKWFN…GLESTRVTGP (74 aa). The interval 98-126 is disordered; the sequence is LESTRVTGPGGAPCIGSERRPKVKGQQKR. A flexible linker region spans residues 107-130; the sequence is GGAPCIGSERRPKVKGQQKRRQKG. CCHC-type zinc fingers lie at residues 131–148 and 153–170; these read DRCY…ECKL and KKCH…QCPA. Residues Cys-133, Cys-136, His-141, Cys-146, Cys-155, Cys-158, His-163, and Cys-168 each coordinate Zn(2+). The disordered stretch occupies residues 175–195; sequence AANLEEQPISEEQELIPETME. Acidic residues predominate over residues 182 to 195; sequence PISEEQELIPETME.

The protein belongs to the lin-28 family. Monomer.

The protein resides in the cytoplasm. The protein localises to the rough endoplasmic reticulum. It is found in the P-body. Its subcellular location is the stress granule. It localises to the nucleus. The protein resides in the nucleolus. RNA-binding protein that inhibits processing of pre-let-7 miRNAs and regulates translation of mRNAs that control developmental timing, pluripotency and metabolism. Seems to recognize a common structural G-quartet (G4) feature in its miRNA and mRNA targets. 'Translational enhancer' that drives specific mRNAs to polysomes and increases the efficiency of protein synthesis. Its association with the translational machinery and target mRNAs results in an increased number of initiation events per molecule of mRNA and, indirectly, in mRNA stabilization. Suppressor of microRNA (miRNA) biogenesis, including that of let-7. Binds specific target miRNA precursors (pre-miRNAs), recognizing an 5'-GGAG-3' motif found in their terminal loop, and recruits uridylyltransferase. This results in the terminal uridylation of target pre-miRNAs. Uridylated pre-miRNAs fail to be processed by Dicer and undergo degradation. Localized to the periendoplasmic reticulum area, binds to a large number of spliced mRNAs and inhibits the translation of mRNAs destined for the ER, reducing the synthesis of transmembrane proteins, ER or Golgi lumen proteins, and secretory proteins. Binds to and enhances the translation of mRNAs for several metabolic enzymes, increasing glycolysis and oxidative phosphorylation. Which, with the let-7 repression may enhance tissue repair in adult tissue. The chain is Protein lin-28 homolog A (lin28a) from Xenopus tropicalis (Western clawed frog).